The primary structure comprises 295 residues: Light-independent protochlorophyllide reductase iron-sulfur ATP-binding protein (295 aa).

ATP-binding positions include 10 to 15 (GIGKST) and Lys39. Residue Ser14 participates in Mg(2+) binding. Residues Cys95 and Cys129 each coordinate [4Fe-4S] cluster. An ATP-binding site is contributed by 180 to 181 (NR). A compositionally biased stretch (basic and acidic residues) spans 275–289 (TKDKKENKKEDKENS). The disordered stretch occupies residues 275 to 295 (TKDKKENKKEDKENSADFTWL).

The protein belongs to the NifH/BchL/ChlL family. Homodimer. Protochlorophyllide reductase is composed of three subunits; ChlL, ChlN and ChlB. It depends on [4Fe-4S] cluster as a cofactor.

The protein resides in the plastid. The protein localises to the chloroplast. It catalyses the reaction chlorophyllide a + oxidized 2[4Fe-4S]-[ferredoxin] + 2 ADP + 2 phosphate = protochlorophyllide a + reduced 2[4Fe-4S]-[ferredoxin] + 2 ATP + 2 H2O. The protein operates within porphyrin-containing compound metabolism; chlorophyll biosynthesis (light-independent). Its function is as follows. Component of the dark-operative protochlorophyllide reductase (DPOR) that uses Mg-ATP and reduced ferredoxin to reduce ring D of protochlorophyllide (Pchlide) to form chlorophyllide a (Chlide). This reaction is light-independent. The L component serves as a unique electron donor to the NB-component of the complex, and binds Mg-ATP. This is Light-independent protochlorophyllide reductase iron-sulfur ATP-binding protein from Physcomitrium patens (Spreading-leaved earth moss).